A 162-amino-acid polypeptide reads, in one-letter code: Xanthine phosphoribosyltransferase (162 aa).

Xanthine-binding residues include leucine 5 and threonine 12. Alanine 113 to alanine 117 serves as a coordination point for 5-phospho-alpha-D-ribose 1-diphosphate. Position 141 (lysine 141) interacts with xanthine.

It belongs to the purine/pyrimidine phosphoribosyltransferase family. Xpt subfamily. Homodimer.

The protein resides in the cytoplasm. The catalysed reaction is XMP + diphosphate = xanthine + 5-phospho-alpha-D-ribose 1-diphosphate. The protein operates within purine metabolism; XMP biosynthesis via salvage pathway; XMP from xanthine: step 1/1. In terms of biological role, converts the preformed base xanthine, a product of nucleic acid breakdown, to xanthosine 5'-monophosphate (XMP), so it can be reused for RNA or DNA synthesis. This chain is Xanthine phosphoribosyltransferase (xpt), found in Streptococcus mitis.